Here is a 444-residue protein sequence, read N- to C-terminus: Acyl-CoA 6-desaturase (444 aa).

Over 1–130 the chain is Cytoplasmic; sequence MGGGGQQTDR…EAEGCFKTQP (130 aa). The region spanning 18-95 is the Cytochrome b5 heme-binding domain; sequence FSSYTWEEVQ…LKPLLIGELE (78 aa). A helical membrane pass occupies residues 131–151; sequence LFFALHLGHILLLEAIAFMMV. The Lumenal portion of the chain corresponds to 152–157; it reads WYFGTG. A helical membrane pass occupies residues 158–178; that stretch reads WINTLIVAVILATAQSQAGWL. Over 179 to 264 the chain is Cytoplasmic; it reads QHDFGHLSVF…KHLPYNHQHK (86 aa). The short motif at 180 to 184 is the Histidine box-1 element; the sequence is HDFGH. The short motif at 217 to 221 is the Histidine box-2 element; that stretch reads HFQHH. The helical transmembrane segment at 265–285 threads the bilayer; the sequence is YFFFIGPPLLIPVYFQFQIFH. Residues 286 to 305 are Lumenal-facing; it reads NMISHGMWVDLLWCISYYVR. The chain crosses the membrane as a helical span at residues 306-326; sequence YFLCYTQFYGVFWAIILFNFV. Residues 327 to 444 lie on the Cytoplasmic side of the membrane; it reads RFMESHWFVW…ELWLDAYLNK (118 aa). The Histidine box-3 signature appears at 382 to 386; that stretch reads QIEHH.

This sequence belongs to the fatty acid desaturase type 1 family.

It localises to the endoplasmic reticulum membrane. It carries out the reaction (9Z,12Z)-octadecadienoyl-CoA + 2 Fe(II)-[cytochrome b5] + O2 + 2 H(+) = (6Z,9Z,12Z)-octadecatrienoyl-CoA + 2 Fe(III)-[cytochrome b5] + 2 H2O. The enzyme catalyses (9Z,12Z,15Z)-octadecatrienoyl-CoA + 2 Fe(II)-[cytochrome b5] + O2 + 2 H(+) = (6Z,9Z,12Z,15Z)-octadecatetraenoyl-CoA + 2 Fe(III)-[cytochrome b5] + 2 H2O. It catalyses the reaction (8Z,11Z,14Z,17Z)-eicosatetraenoyl-CoA + 2 Fe(II)-[cytochrome b5] + O2 + 2 H(+) = (5Z,8Z,11Z,14Z,17Z)-eicosapentaenoyl-CoA + 2 Fe(III)-[cytochrome b5] + 2 H2O. The catalysed reaction is (8Z,11Z,14Z)-eicosatrienoyl-CoA + 2 Fe(II)-[cytochrome b5] + O2 + 2 H(+) = (5Z,8Z,11Z,14Z)-eicosatetraenoyl-CoA + 2 Fe(III)-[cytochrome b5] + 2 H2O. The protein operates within lipid metabolism; polyunsaturated fatty acid biosynthesis. In terms of biological role, fatty acid desaturase with bifunctional delta-5 and delta-6 activities. Component of a lipid metabolic pathway that catalyzes the biosynthesis of polyunsaturated fatty acids (PUFA) with preference toward n-3 substrates and Delta-6 function. This is Acyl-CoA 6-desaturase (fads2) from Danio rerio (Zebrafish).